A 253-amino-acid polypeptide reads, in one-letter code: Light-harvesting complex stress-related protein 1, chloroplastic (253 aa).

The transit peptide at 1-39 directs the protein to the chloroplast; that stretch reads MAMMMRKAAAVPASSRRSVAVNSVSGKRTVSGKAGAPVP. Tyr45 is a binding site for chlorophyll b. Chlorophyll a-binding residues include Phe60, Glu81, and His84. Position 86 (Arg86) interacts with chlorophyll b. The chain crosses the membrane as a helical span at residues 87 to 107; sequence VAMLAALGFIVGEQLQDFPLF. Residue Gln124 participates in chlorophyll a binding. The chain crosses the membrane as a helical span at residues 131-151; it reads EPLLIAIGVAESYRVAVGWAT. Chlorophyll b is bound by residues Glu141 and Arg144. Chlorophyll a contacts are provided by Lys190, Glu191, Asn194, Arg196, and Gln208. A helical membrane pass occupies residues 197-217; the sequence is LAMIAIAAFVAQELVEQTEIF.

It belongs to the light-harvesting chlorophyll a/b-binding (LHC) protein family.

The protein resides in the plastid. It localises to the chloroplast thylakoid membrane. In terms of biological role, required for non-photochemical quenching (NPQ), a mechanism that converts and dissipates the harmful excess absorbed light energy into heat and protect the photosynthetic apparatus from photo-oxidative damage. Is able to sense luminal acidification of the thylakoid membranes, which occurs along with elevated electron flow caused by excess light, and to induce a large, fast, and reversible pH-dependent quenching in LHCII-containing membranes. Mediates excitation energy transfer from light-harvesting complex II (LHCII) to photosystem I (PSI), rather than photosystem II (PSII), at low pH, which mimics the acidified lumen of the thylakoid membranes in high light-exposed chloroplasts. Activates PSI-dependent fluorescence quenching in addition to dissipating excitation energy in LHCII to avoid photooxidative stress under excess light. The polypeptide is Light-harvesting complex stress-related protein 1, chloroplastic (Chlamydomonas reinhardtii (Chlamydomonas smithii)).